The primary structure comprises 409 residues: Microfibrillar-associated protein 3-like (409 aa).

An N-terminal signal peptide occupies residues 1-28; that stretch reads MGLQKSHLTVCLPPSVPFLILVSTLATA. Topologically, residues 29–148 are extracellular; the sequence is KSVTNSTLNG…TLRVIFTSGD (120 aa). N-linked (GlcNAc...) asparagine glycosylation is found at Asn-33, Asn-37, Asn-67, Asn-111, and Asn-135. The Ig-like C2-type domain occupies 47–141; it reads PVIIARTDHI…GTINNTVTLR (95 aa). Cysteines 68 and 125 form a disulfide. A helical membrane pass occupies residues 149–169; the sequence is MGVYYMVVCLVAFTIVMILNI. At 170–409 the chain is on the cytoplasmic side; the sequence is TRLCMMSSHL…NTCIIYESHV (240 aa). The residue at position 287 (Tyr-287) is a Phosphotyrosine. Residues Ser-298, Ser-303, Ser-306, and Ser-307 each carry the phosphoserine modification. The tract at residues 319-395 is disordered; the sequence is VSVHPQSKRD…AHLETTEPAV (77 aa). Residues 325–340 are compositionally biased toward basic and acidic residues; that stretch reads SKRDHVDDQEGGHFEV. Positions 356 to 373 are enriched in low complexity; that stretch reads TAEPSTDITTTELTSEET.

The protein localises to the cell membrane. It localises to the nucleus. Its subcellular location is the cytoplasm. In terms of biological role, may participate in the nuclear signaling of EGFR and MAPK1/ERK2. This Mus musculus (Mouse) protein is Microfibrillar-associated protein 3-like (Mfap3l).